Here is a 278-residue protein sequence, read N- to C-terminus: 3-methyl-2-oxobutanoate hydroxymethyltransferase (278 aa).

Asp52 and Asp91 together coordinate Mg(2+). Residues 52–53 (DS), Asp91, and Lys121 contribute to the 3-methyl-2-oxobutanoate site. Glu123 provides a ligand contact to Mg(2+). Residue Glu190 is the Proton acceptor of the active site.

This sequence belongs to the PanB family. Homodecamer; pentamer of dimers. The cofactor is Mg(2+).

Its subcellular location is the cytoplasm. It carries out the reaction 3-methyl-2-oxobutanoate + (6R)-5,10-methylene-5,6,7,8-tetrahydrofolate + H2O = 2-dehydropantoate + (6S)-5,6,7,8-tetrahydrofolate. The protein operates within cofactor biosynthesis; (R)-pantothenate biosynthesis; (R)-pantoate from 3-methyl-2-oxobutanoate: step 1/2. Functionally, catalyzes the reversible reaction in which hydroxymethyl group from 5,10-methylenetetrahydrofolate is transferred onto alpha-ketoisovalerate to form ketopantoate. The polypeptide is 3-methyl-2-oxobutanoate hydroxymethyltransferase (Rhodospirillum rubrum (strain ATCC 11170 / ATH 1.1.1 / DSM 467 / LMG 4362 / NCIMB 8255 / S1)).